The chain runs to 428 residues: Probable protein phosphatase 2C 12 (428 aa).

Residues 24–293 form the PPM-type phosphatase domain; sequence KIDNPELIHG…DDTTCIVVDI (270 aa). Mn(2+) contacts are provided by aspartate 69, glycine 70, aspartate 245, and aspartate 284. Positions 301 to 331 are disordered; the sequence is ASVPPPKKQGKGMLKSMFKRKTSDSSSNIEK.

Belongs to the PP2C family. The cofactor is Mg(2+). It depends on Mn(2+) as a cofactor.

The enzyme catalyses O-phospho-L-seryl-[protein] + H2O = L-seryl-[protein] + phosphate. It carries out the reaction O-phospho-L-threonyl-[protein] + H2O = L-threonyl-[protein] + phosphate. The chain is Probable protein phosphatase 2C 12 from Arabidopsis thaliana (Mouse-ear cress).